The following is a 953-amino-acid chain: Translation initiation factor IF-2 (953 aa).

2 disordered regions span residues Lys-52–Leu-247 and Thr-279–Lys-363. Basic and acidic residues-rich tracts occupy residues Thr-80 to Gln-89, Phe-98 to Ala-111, and Gln-140 to Lys-188. Positions Arg-191–Ser-207 are enriched in polar residues. Residues Arg-229–Leu-247 are compositionally biased toward basic and acidic residues. Over residues Lys-282–Thr-291 the composition is skewed to polar residues. The segment covering Ala-300–Lys-317 has biased composition (basic and acidic residues). Residues Ser-322–Asn-338 are compositionally biased toward low complexity. Residues Lys-339–Asn-348 show a composition bias toward basic residues. The 170-residue stretch at Glu-454–Lys-623 folds into the tr-type G domain. Positions Gly-463–Thr-470 are G1. Gly-463–Thr-470 serves as a coordination point for GTP. The G2 stretch occupies residues Gly-488–His-492. Residues Asp-509–Gly-512 are G3. GTP contacts are provided by residues Asp-509 to His-513 and Asn-563 to Asp-566. The interval Asn-563–Asp-566 is G4. The segment at Ser-599 to Lys-601 is G5.

Belongs to the TRAFAC class translation factor GTPase superfamily. Classic translation factor GTPase family. IF-2 subfamily.

It localises to the cytoplasm. Its function is as follows. One of the essential components for the initiation of protein synthesis. Protects formylmethionyl-tRNA from spontaneous hydrolysis and promotes its binding to the 30S ribosomal subunits. Also involved in the hydrolysis of GTP during the formation of the 70S ribosomal complex. This is Translation initiation factor IF-2 from Streptococcus pyogenes serotype M5 (strain Manfredo).